The sequence spans 371 residues: Histidinol-phosphate aminotransferase (371 aa).

Lys228 is modified (N6-(pyridoxal phosphate)lysine).

It belongs to the class-II pyridoxal-phosphate-dependent aminotransferase family. Histidinol-phosphate aminotransferase subfamily. The cofactor is pyridoxal 5'-phosphate.

It catalyses the reaction L-histidinol phosphate + 2-oxoglutarate = 3-(imidazol-4-yl)-2-oxopropyl phosphate + L-glutamate. It participates in amino-acid biosynthesis; L-histidine biosynthesis; L-histidine from 5-phospho-alpha-D-ribose 1-diphosphate: step 7/9. In Methanococcus maripaludis (strain C6 / ATCC BAA-1332), this protein is Histidinol-phosphate aminotransferase.